The chain runs to 77 residues: Protein NS4 (77 aa).

The protein resides in the host cytoplasm. It localises to the host nucleus. The protein localises to the host nucleolus. May function as a nucleic acid binding protein that modulates transcription of genes participating in the IFN response. In Antilocapra americana (Pronghorn), this protein is Protein NS4 (Segment-9).